A 131-amino-acid polypeptide reads, in one-letter code: Profilin-5 (131 aa).

Residues Cys13 and Cys115 are joined by a disulfide bond. The short motif at 81 to 97 (AVIRGKKGAGGITVKKT) is the Involved in PIP2 interaction element. Thr111 carries the post-translational modification Phosphothreonine.

The protein belongs to the profilin family. In terms of assembly, occurs in many kinds of cells as a complex with monomeric actin in a 1:1 ratio. In terms of processing, phosphorylated by MAP kinases.

It is found in the cytoplasm. The protein resides in the cytoskeleton. In terms of biological role, binds to actin and affects the structure of the cytoskeleton. At high concentrations, profilin prevents the polymerization of actin, whereas it enhances it at low concentrations. The polypeptide is Profilin-5 (Corylus avellana (European hazel)).